The sequence spans 460 residues: Inner membrane symporter YicJ (460 aa).

The Periplasmic portion of the chain corresponds to 1–11; the sequence is MKSEVLSVKEK. A run of 2 helical transmembrane segments spans residues 12-32 and 33-53; these read IGYG…MLYM and MFFY…MFLV. Over 54–80 the chain is Periplasmic; sequence ARALDAISDPCMGLLADRTRSRWGKFR. Residues 81–101 form a helical membrane-spanning segment; the sequence is PWVLFGALPFGIVCVLAYSTP. Residues 102-116 lie on the Cytoplasmic side of the membrane; it reads DLSMNGKMIYAAITY. A helical transmembrane segment spans residues 117-137; that stretch reads TLLTLLYTVVNIPYCALGGVI. The Periplasmic segment spans residues 138–152; it reads TNDPTQRISLQSWRF. Residues 153–173 traverse the membrane as a helical segment; the sequence is VLATAGGMLSTVLMMPLVNLI. Over 174–181 the chain is Cytoplasmic; that stretch reads GGDNKPLG. Residues 182–202 form a helical membrane-spanning segment; sequence FQGGIAVLSVVAFMMLAFCFF. The Periplasmic segment spans residues 203–248; the sequence is TTKERVEAPPTTTSMREDLRDIWQNDQWRIVGLLTIFNILAVCVRG. The chain crosses the membrane as a helical span at residues 249 to 269; sequence GAMMYYVTWILGTPEVFVAFL. Residues 270–288 lie on the Cytoplasmic side of the membrane; it reads TTYCVGNLIGSALAKPLTD. Residues 289–309 form a helical membrane-spanning segment; that stretch reads WKCKVTIFWWTNALLAVISLA. M310 is a topological domain (periplasmic). Residues 311–331 form a helical membrane-spanning segment; sequence FFVPMQASITMFVFIFVIGVL. Residues 332–366 are Cytoplasmic-facing; sequence HQLVTPIQWVMMSDTVDYGEWCNGKRLTGISFAGT. Residues 367–387 traverse the membrane as a helical segment; that stretch reads LFVLKLGLAFGGALIGWMLAY. At 388-403 the chain is on the periplasmic side; it reads GGYDAAEKAQNSATIS. Residues 404–424 form a helical membrane-spanning segment; the sequence is IIIALFTIVPAICYLLSAIIA. The Cytoplasmic segment spans residues 425–460; that stretch reads KRYYSLTTHNLKTVMEQLAQGKRRCQQQFTSQEVQN.

The protein belongs to the sodium:galactoside symporter (TC 2.A.2) family.

It is found in the cell inner membrane. The protein is Inner membrane symporter YicJ (yicJ) of Escherichia coli (strain K12).